A 316-amino-acid chain; its full sequence is Biotin synthase (316 aa).

One can recognise a Radical SAM core domain in the interval 36–264; the sequence is FDNRITLCAI…TATLRICGGR (229 aa). Residues Cys53, Cys57, and Cys60 each coordinate [4Fe-4S] cluster. Positions 129, 189, and 259 each coordinate [2Fe-2S] cluster.

The protein belongs to the radical SAM superfamily. Biotin synthase family. Homodimer. [4Fe-4S] cluster is required as a cofactor. Requires [2Fe-2S] cluster as cofactor.

The catalysed reaction is (4R,5S)-dethiobiotin + (sulfur carrier)-SH + 2 reduced [2Fe-2S]-[ferredoxin] + 2 S-adenosyl-L-methionine = (sulfur carrier)-H + biotin + 2 5'-deoxyadenosine + 2 L-methionine + 2 oxidized [2Fe-2S]-[ferredoxin]. It participates in cofactor biosynthesis; biotin biosynthesis; biotin from 7,8-diaminononanoate: step 2/2. In terms of biological role, catalyzes the conversion of dethiobiotin (DTB) to biotin by the insertion of a sulfur atom into dethiobiotin via a radical-based mechanism. The polypeptide is Biotin synthase (Desulfovibrio desulfuricans (strain ATCC 27774 / DSM 6949 / MB)).